Here is a 452-residue protein sequence, read N- to C-terminus: Bis(5'-adenosyl)-triphosphatase enpp4 (452 aa).

The N-terminal stretch at 1–19 is a signal peptide; it reads MFGRVFIVAVLYCITICKG. Over 20 to 407 the chain is Extracellular; the sequence is EDPTNSSTPK…NQWCIQVSEA (388 aa). N-linked (GlcNAc...) asparagine glycosylation is present at Asn24. Residues Asp36 and Thr72 each coordinate Zn(2+). Thr72 functions as the AMP-threonine intermediate in the catalytic mechanism. Asn93 is a binding site for substrate. Asn107 carries an N-linked (GlcNAc...) asparagine glycan. Tyr154 is a substrate binding site. N-linked (GlcNAc...) asparagine glycosylation is found at Asn155 and Asn175. Asp189 and His193 together coordinate Zn(2+). Asp189 contributes to the substrate binding site. The N-linked (GlcNAc...) asparagine glycan is linked to Asn202. Residues Asp237 and His238 each coordinate Zn(2+). Cys254 and Cys287 form a disulfide bridge. Asn259 and Asn327 each carry an N-linked (GlcNAc...) asparagine glycan. His336 lines the Zn(2+) pocket. N-linked (GlcNAc...) asparagine glycosylation is present at Asn386. An intrachain disulfide couples Cys394 to Cys401. A helical transmembrane segment spans residues 408–428; sequence IGIVIGAIMVLTTLTCIIIML. At 429–452 the chain is on the cytoplasmic side; that stretch reads KKKMPSARPFSRLQFQDDDDPLIG.

The protein belongs to the nucleotide pyrophosphatase/phosphodiesterase family. Zn(2+) is required as a cofactor.

Its subcellular location is the cell membrane. The enzyme catalyses P(1),P(3)-bis(5'-adenosyl) triphosphate + H2O = AMP + ADP + 2 H(+). Hydrolyzes extracellular Ap3A into AMP and ADP, and Ap4A into AMP and ATP. Ap3A and Ap4A are diadenosine polyphosphates thought to induce proliferation of vascular smooth muscle cells. Acts as a procoagulant, mediating platelet aggregation at the site of nascent thrombus via release of ADP from Ap3A and activation of ADP receptors. The chain is Bis(5'-adenosyl)-triphosphatase enpp4 (enpp4) from Xenopus laevis (African clawed frog).